A 425-amino-acid polypeptide reads, in one-letter code: Serine--tRNA ligase (425 aa).

Residue 231–233 (TAE) participates in L-serine binding. Residue 262–264 (RSE) participates in ATP binding. L-serine is bound at residue E285. Position 349-352 (349-352 (EISS)) interacts with ATP. S385 serves as a coordination point for L-serine.

The protein belongs to the class-II aminoacyl-tRNA synthetase family. Type-1 seryl-tRNA synthetase subfamily. In terms of assembly, homodimer. The tRNA molecule binds across the dimer.

Its subcellular location is the cytoplasm. It carries out the reaction tRNA(Ser) + L-serine + ATP = L-seryl-tRNA(Ser) + AMP + diphosphate + H(+). The catalysed reaction is tRNA(Sec) + L-serine + ATP = L-seryl-tRNA(Sec) + AMP + diphosphate + H(+). Its pathway is aminoacyl-tRNA biosynthesis; selenocysteinyl-tRNA(Sec) biosynthesis; L-seryl-tRNA(Sec) from L-serine and tRNA(Sec): step 1/1. Its function is as follows. Catalyzes the attachment of serine to tRNA(Ser). Is also able to aminoacylate tRNA(Sec) with serine, to form the misacylated tRNA L-seryl-tRNA(Sec), which will be further converted into selenocysteinyl-tRNA(Sec). This is Serine--tRNA ligase from Bartonella tribocorum (strain CIP 105476 / IBS 506).